The chain runs to 98 residues: MTSINLNLTMAFSLALTGVLVYRSHLMSTLLCLEGMMLSLFILMALLISHSHMFSVSMAPLILLVFSACEAGVGLALLVKISTNYGNDYVQNLNLLQC.

3 helical membrane passes run 1 to 21, 28 to 48, and 59 to 79; these read MTSI…GVLV, STLL…ALLI, and APLI…ALLV.

It belongs to the complex I subunit 4L family. Core subunit of respiratory chain NADH dehydrogenase (Complex I) which is composed of 45 different subunits.

The protein resides in the mitochondrion inner membrane. It catalyses the reaction a ubiquinone + NADH + 5 H(+)(in) = a ubiquinol + NAD(+) + 4 H(+)(out). In terms of biological role, core subunit of the mitochondrial membrane respiratory chain NADH dehydrogenase (Complex I) which catalyzes electron transfer from NADH through the respiratory chain, using ubiquinone as an electron acceptor. Part of the enzyme membrane arm which is embedded in the lipid bilayer and involved in proton translocation. In Dactylopsila trivirgata (Striped possum), this protein is NADH-ubiquinone oxidoreductase chain 4L (MT-ND4L).